The chain runs to 460 residues: DNA repair protein RadA (460 aa).

The segment at 11-28 (CNECGADYPRWQGQCSAC) adopts a C4-type zinc-finger fold. 102–109 (GNPGAGKS) contacts ATP. The RadA KNRFG motif motif lies at 258 to 262 (KNRFG). The interval 357–460 (DVFVNVVGGV…ADALSVFDDL (104 aa)) is lon-protease-like.

This sequence belongs to the RecA family. RadA subfamily.

In terms of biological role, DNA-dependent ATPase involved in processing of recombination intermediates, plays a role in repairing DNA breaks. Stimulates the branch migration of RecA-mediated strand transfer reactions, allowing the 3' invading strand to extend heteroduplex DNA faster. Binds ssDNA in the presence of ADP but not other nucleotides, has ATPase activity that is stimulated by ssDNA and various branched DNA structures, but inhibited by SSB. Does not have RecA's homology-searching function. The chain is DNA repair protein RadA from Salmonella typhimurium (strain LT2 / SGSC1412 / ATCC 700720).